A 749-amino-acid polypeptide reads, in one-letter code: Catalase-peroxidase (749 aa).

Residues M1 to H12 show a composition bias toward basic and acidic residues. Residues M1–T40 are disordered. A compositionally biased stretch (polar residues) spans D14–E24. Positions W113–Y240 form a cross-link, tryptophyl-tyrosyl-methioninium (Trp-Tyr) (with M-266). The active-site Proton acceptor is the H114. Residues Y240–M266 constitute a cross-link (tryptophyl-tyrosyl-methioninium (Tyr-Met) (with W-113)). H281 contacts heme b.

It belongs to the peroxidase family. Peroxidase/catalase subfamily. Homodimer or homotetramer. Requires heme b as cofactor. In terms of processing, formation of the three residue Trp-Tyr-Met cross-link is important for the catalase, but not the peroxidase activity of the enzyme.

The enzyme catalyses H2O2 + AH2 = A + 2 H2O. It carries out the reaction 2 H2O2 = O2 + 2 H2O. In terms of biological role, bifunctional enzyme with both catalase and broad-spectrum peroxidase activity. The protein is Catalase-peroxidase of Mycobacterium sp. (strain JLS).